The chain runs to 174 residues: UPF0200 protein PAE1629 (174 aa).

Position 9–16 (9–16 (GLPGSGKT)) interacts with ATP.

The protein belongs to the UPF0200 family.

This chain is UPF0200 protein PAE1629, found in Pyrobaculum aerophilum (strain ATCC 51768 / DSM 7523 / JCM 9630 / CIP 104966 / NBRC 100827 / IM2).